A 69-amino-acid chain; its full sequence is UPF0270 protein VCM66_2532 (69 aa).

It belongs to the UPF0270 family.

The sequence is that of UPF0270 protein VCM66_2532 from Vibrio cholerae serotype O1 (strain M66-2).